The primary structure comprises 154 residues: Myoglobin (154 aa).

One can recognise a Globin domain in the interval 2–148 (GLSDGEWQLV…FRNDMAAKYK (147 aa)). Position 4 is a phosphoserine (Ser-4). His-65 serves as a coordination point for nitrite. His-65 is an O2 binding site. Thr-68 is subject to Phosphothreonine. His-94 serves as a coordination point for heme b.

The protein belongs to the globin family. In terms of assembly, monomeric.

Its subcellular location is the cytoplasm. The protein resides in the sarcoplasm. The catalysed reaction is Fe(III)-heme b-[protein] + nitric oxide + H2O = Fe(II)-heme b-[protein] + nitrite + 2 H(+). It carries out the reaction H2O2 + AH2 = A + 2 H2O. In terms of biological role, monomeric heme protein which primary function is to store oxygen and facilitate its diffusion within muscle tissues. Reversibly binds oxygen through a pentacoordinated heme iron and enables its timely and efficient release as needed during periods of heightened demand. Depending on the oxidative conditions of tissues and cells, and in addition to its ability to bind oxygen, it also has a nitrite reductase activity whereby it regulates the production of bioactive nitric oxide. Under stress conditions, like hypoxia and anoxia, it also protects cells against reactive oxygen species thanks to its pseudoperoxidase activity. This is Myoglobin (MB) from Aotus trivirgatus (Three-striped night monkey).